The chain runs to 440 residues: Ribosomal protein uS12 methylthiotransferase RimO (440 aa).

The MTTase N-terminal domain maps to 2-117 (VKVGFVSLGC…LPNVIKKLYE (116 aa)). Positions 11, 47, 80, 156, 160, and 163 each coordinate [4Fe-4S] cluster. A Radical SAM core domain is found at 142–371 (ATPKFYAYIK…LNLQRKISLE (230 aa)). Residues 374–440 (RKRISKKYEV…FEYDLVGEVI (67 aa)) enclose the TRAM domain.

It belongs to the methylthiotransferase family. RimO subfamily. [4Fe-4S] cluster is required as a cofactor.

Its subcellular location is the cytoplasm. The catalysed reaction is L-aspartate(89)-[ribosomal protein uS12]-hydrogen + (sulfur carrier)-SH + AH2 + 2 S-adenosyl-L-methionine = 3-methylsulfanyl-L-aspartate(89)-[ribosomal protein uS12]-hydrogen + (sulfur carrier)-H + 5'-deoxyadenosine + L-methionine + A + S-adenosyl-L-homocysteine + 2 H(+). Functionally, catalyzes the methylthiolation of an aspartic acid residue of ribosomal protein uS12. This is Ribosomal protein uS12 methylthiotransferase RimO from Caldicellulosiruptor saccharolyticus (strain ATCC 43494 / DSM 8903 / Tp8T 6331).